We begin with the raw amino-acid sequence, 750 residues long: K(+)-insensitive pyrophosphate-energized proton pump (750 aa).

A run of 5 helical transmembrane segments spans residues 1–21, 51–71, 78–98, 133–153, and 161–181; these read MYGL…YQGI, FIII…GGLN, VVFI…VAWF, IGML…LFIP, and FIGF…AGGI. Substrate is bound at residue lysine 184. Mg(2+) is bound by residues aspartate 187, aspartate 191, and aspartate 216. Helical transmembrane passes span 227–247, 257–277, 301–321, 327–347, 391–411, and 420–440; these read DGFE…LLAI, LVWI…SYWV, LVWL…YMLI, GTMW…GALI, WMGL…TLGL, and VFAF…TIAV. Aspartate 448 is a Mg(2+) binding site. 4 helical membrane-spanning segments follow: residues 503-523, 538-558, 607-627, and 629-649; these read VLIG…IMIL, ILWP…YWFT, GMIN…CLES, and LFIG…IFMA. Ca(2+) contacts are provided by aspartate 656, aspartate 681, and aspartate 685. Residue lysine 688 participates in substrate binding. Transmembrane regions (helical) follow at residues 694–714 and 716–736; these read ALNP…ELAI and LPTT…LVFV.

The protein belongs to the H(+)-translocating pyrophosphatase (TC 3.A.10) family. K(+)-insensitive subfamily. In terms of assembly, homodimer. Mg(2+) is required as a cofactor.

The protein localises to the cell inner membrane. The catalysed reaction is diphosphate + H2O + H(+)(in) = 2 phosphate + 2 H(+)(out). Functionally, proton pump that utilizes the energy of pyrophosphate hydrolysis as the driving force for proton movement across the membrane. Generates a proton motive force. The sequence is that of K(+)-insensitive pyrophosphate-energized proton pump from Chlorobaculum tepidum (strain ATCC 49652 / DSM 12025 / NBRC 103806 / TLS) (Chlorobium tepidum).